Consider the following 755-residue polypeptide: Biodegradative arginine decarboxylase (755 aa).

Lys386 carries the post-translational modification N6-(pyridoxal phosphate)lysine.

It belongs to the Orn/Lys/Arg decarboxylase class-I family. In terms of assembly, homodecamer. The basic unit is a homodimer, organized into a ring of giving a pentamer of five homodimers. Pyridoxal 5'-phosphate serves as cofactor.

Its subcellular location is the cytoplasm. It catalyses the reaction L-arginine + H(+) = agmatine + CO2. Homodimers are probably inactive, their assembly into a homodecamer at low pH requires neutralization of negatively charged residues. This uses cytoplasmic protons, contributing pH regulation and stabilizes the homodecamer. Component of the acid-resistance (AR) system allowing enteric pathogens to survive the acidic environment in the stomach. ADC can be found in two forms: biodegradative (this enzyme) and biosynthetic (speA). The biodegradative form plays a role in regulating pH by consuming proteins. Converts arginine imported by AdiC to agmatine which is then exported by AdiC. This is Biodegradative arginine decarboxylase (adiA) from Escherichia coli (strain K12).